A 78-amino-acid polypeptide reads, in one-letter code: MSAVVVKEQLEQYISKIERLEEEKSDLAQEVKDIFQDAASHGFDVKAMKAILKLKKLDKNKLAEQDAMLELYRDTLGI.

Belongs to the UPF0335 family.

This is UPF0335 protein RP113 from Rickettsia prowazekii (strain Madrid E).